The following is a 328-amino-acid chain: MSHVELQPGFDFQQAGKEVLAIERECLAELDQYINQNFTLACEKMFWCKGKVVVMGMGKSGHIGRKMAATFASTGTPSFFVHPGEAAHGDLGMVTPQDVVIAISNSGESSEITALIPVLKRLHVPLICITGCPESSMARAADVHLCVKVAKEACPLGLAPTSSTTATLVMGDALAVALLKARGFTAEDFALSHPGGALGRKLLLRVNDIMHTGDEIPHVKKTASLRDALLEVTRKNLGMTVICDDNMMIEGIFTDGDLRRVFDMGVDVRRLSIADVMTPGGIRVRPGILAVEALNLMQSRHITSVMVADGDHLLGVLHMHDLLRAGVV.

Positions 42 to 184 constitute an SIS domain; sequence CEKMFWCKGK…AVALLKARGF (143 aa). Substrate-binding positions include 75-76, H82, H88, 114-123, 148-150, T222, and D275; these read GT, ALIPVLKRLH, and KVA. H82 lines the Zn(2+) pocket. The CBS 1 domain occupies 210-268; that stretch reads MHTGDEIPHVKKTASLRDALLEVTRKNLGMTVICDDNMMIEGIFTDGDLRRVFDMGVDV. The 52-residue stretch at 277–328 folds into the CBS 2 domain; sequence MTPGGIRVRPGILAVEALNLMQSRHITSVMVADGDHLLGVLHMHDLLRAGVV.

It belongs to the SIS family. GutQ/KpsF subfamily. As to quaternary structure, homotetramer.

It carries out the reaction D-arabinose 5-phosphate = D-ribulose 5-phosphate. The protein operates within carbohydrate biosynthesis; 3-deoxy-D-manno-octulosonate biosynthesis; 3-deoxy-D-manno-octulosonate from D-ribulose 5-phosphate: step 1/3. It participates in bacterial outer membrane biogenesis; lipopolysaccharide biosynthesis. Functionally, involved in the biosynthesis of 3-deoxy-D-manno-octulosonate (KDO), a unique 8-carbon sugar component of lipopolysaccharides (LPSs). Catalyzes the reversible aldol-ketol isomerization between D-ribulose 5-phosphate (Ru5P) and D-arabinose 5-phosphate (A5P). In Escherichia coli O6:H1 (strain CFT073 / ATCC 700928 / UPEC), this protein is Arabinose 5-phosphate isomerase KdsD (kdsD).